The primary structure comprises 377 residues: Acetylornithine aminotransferase (377 aa).

Residues Gly-94–Thr-95 and Phe-121 each bind pyridoxal 5'-phosphate. N(2)-acetyl-L-ornithine is bound at residue Arg-124. Asp-206–Gln-209 is a binding site for pyridoxal 5'-phosphate. Lys-235 carries the N6-(pyridoxal phosphate)lysine modification. N(2)-acetyl-L-ornithine is bound at residue Ser-263. Pyridoxal 5'-phosphate is bound at residue Thr-264.

Belongs to the class-III pyridoxal-phosphate-dependent aminotransferase family. ArgD subfamily. Homodimer. Pyridoxal 5'-phosphate serves as cofactor.

The protein resides in the cytoplasm. It catalyses the reaction N(2)-acetyl-L-ornithine + 2-oxoglutarate = N-acetyl-L-glutamate 5-semialdehyde + L-glutamate. It participates in amino-acid biosynthesis; L-arginine biosynthesis; N(2)-acetyl-L-ornithine from L-glutamate: step 4/4. This Lactococcus lactis subsp. lactis (strain IL1403) (Streptococcus lactis) protein is Acetylornithine aminotransferase.